A 540-amino-acid chain; its full sequence is Chaperonin GroEL (540 aa).

ATP-binding positions include 29–32, 86–90, G413, 476–478, and D492; these read TLGP, DGTTT, and NAA.

Belongs to the chaperonin (HSP60) family. In terms of assembly, forms a cylinder of 14 subunits composed of two heptameric rings stacked back-to-back. Interacts with the co-chaperonin GroES.

It is found in the cytoplasm. The enzyme catalyses ATP + H2O + a folded polypeptide = ADP + phosphate + an unfolded polypeptide.. Functionally, together with its co-chaperonin GroES, plays an essential role in assisting protein folding. The GroEL-GroES system forms a nano-cage that allows encapsulation of the non-native substrate proteins and provides a physical environment optimized to promote and accelerate protein folding. This Streptococcus agalactiae protein is Chaperonin GroEL.